Here is a 342-residue protein sequence, read N- to C-terminus: tRNA N6-adenosine threonylcarbamoyltransferase (342 aa).

Positions 114 and 118 each coordinate Fe cation. Substrate is bound by residues 136–140, D169, G182, D186, and N275; that span reads LVSGG. Position 301 (D301) interacts with Fe cation.

It belongs to the KAE1 / TsaD family. Requires Fe(2+) as cofactor.

It is found in the cytoplasm. It carries out the reaction L-threonylcarbamoyladenylate + adenosine(37) in tRNA = N(6)-L-threonylcarbamoyladenosine(37) in tRNA + AMP + H(+). Its function is as follows. Required for the formation of a threonylcarbamoyl group on adenosine at position 37 (t(6)A37) in tRNAs that read codons beginning with adenine. Is involved in the transfer of the threonylcarbamoyl moiety of threonylcarbamoyl-AMP (TC-AMP) to the N6 group of A37, together with TsaE and TsaB. TsaD likely plays a direct catalytic role in this reaction. This is tRNA N6-adenosine threonylcarbamoyltransferase from Streptococcus pyogenes serotype M3 (strain ATCC BAA-595 / MGAS315).